Consider the following 241-residue polypeptide: Uridylate kinase (241 aa).

ATP contacts are provided by residues 10–13, Gly53, and Arg57; that span reads KLSG. UMP-binding positions include Asp72 and 133–140; that span reads AGSPYFST. Residues Asn161, Tyr167, and Asp170 each coordinate ATP.

The protein belongs to the UMP kinase family. Homohexamer.

The protein resides in the cytoplasm. The catalysed reaction is UMP + ATP = UDP + ADP. Its pathway is pyrimidine metabolism; CTP biosynthesis via de novo pathway; UDP from UMP (UMPK route): step 1/1. With respect to regulation, inhibited by UTP. In terms of biological role, catalyzes the reversible phosphorylation of UMP to UDP. In Onion yellows phytoplasma (strain OY-M), this protein is Uridylate kinase.